A 446-amino-acid polypeptide reads, in one-letter code: Rhamnogalacturonase A (446 aa).

The first 18 residues, 1–18, serve as a signal peptide directing secretion; the sequence is MPALPILALALAPLLVNG. Cys-39 and Cys-65 are disulfide-bonded. Asn-50, Asn-115, and Asn-124 each carry an N-linked (GlcNAc...) asparagine glycan. Asp-216 (proton donor) is an active-site residue. An intrachain disulfide couples Cys-218 to Cys-235. N-linked (GlcNAc...) asparagine glycans are attached at residues Asn-236, Asn-281, and Asn-318. 2 disulfides stabilise this stretch: Cys-341–Cys-347 and Cys-369–Cys-378.

The protein belongs to the glycosyl hydrolase 28 family.

The protein resides in the secreted. The enzyme catalyses Endohydrolysis of alpha-D-GalA-(1-&gt;2)-alpha-L-Rha glycosidic bond in the rhamnogalacturonan I backbone with initial inversion of anomeric configuration releasing oligosaccharides with beta-D-GalA at the reducing end.. Its function is as follows. Pectinolytic enzymes consist of four classes of enzymes: pectine lyase, polygalacturonase, pectin methylesterase and rhamnogalacturonase. Hydrolyzes alpha-D-galacturonopyranosyl-(1,2)-alpha-L-rhamnopyranosyl linkages in the backbone of the hairy regions of pectins. This Aspergillus niger protein is Rhamnogalacturonase A (rhgA).